The following is a 129-amino-acid chain: UPF0102 protein Mrad2831_2938 (129 aa).

The protein belongs to the UPF0102 family.

The sequence is that of UPF0102 protein Mrad2831_2938 from Methylobacterium radiotolerans (strain ATCC 27329 / DSM 1819 / JCM 2831 / NBRC 15690 / NCIMB 10815 / 0-1).